The sequence spans 376 residues: MAKQDYYEILGVSKTAEEREIRKAYKRLAMKYHPDRNQGDKEAEAKFKEIKEAYEVLTDSQKRAAYDQYGHAAFEQGGMGGGGFGGGADFSDIFGDVFGDIFGGGRGRQRAARGADLRYNMELTLEEAVRGVTKEIRIPTLEECDVCHGSGAKPGTQPQTCPTCHGSGQVQMRQGFFAVQQTCPHCQGRGTLIKDPCNKCHGHGRVERSKTLSVKIPAGVDTGDRIRLAGEGEAGEHGAPAGDLYVQVQVKQHPIFEREGNNLYCEVPINFAMAALGGEIEVPTLDGRVKLKVPGETQTGKLFRMRGKGVKSVRGGAQGDLLCRVVVETPVGLNEKQKQLLQELQESFGGPTGEHNSPRSKSFFDGVKKFFDDLTR.

The J domain maps to 5-70 (DYYEILGVSK…QKRAAYDQYG (66 aa)). The CR-type zinc finger occupies 131 to 209 (GVTKEIRIPT…CHGHGRVERS (79 aa)). Positions 144, 147, 161, 164, 183, 186, 197, and 200 each coordinate Zn(2+). 4 CXXCXGXG motif repeats span residues 144–151 (CDVCHGSG), 161–168 (CPTCHGSG), 183–190 (CPHCQGRG), and 197–204 (CNKCHGHG).

It belongs to the DnaJ family. Homodimer. It depends on Zn(2+) as a cofactor.

The protein resides in the cytoplasm. Functionally, participates actively in the response to hyperosmotic and heat shock by preventing the aggregation of stress-denatured proteins and by disaggregating proteins, also in an autonomous, DnaK-independent fashion. Unfolded proteins bind initially to DnaJ; upon interaction with the DnaJ-bound protein, DnaK hydrolyzes its bound ATP, resulting in the formation of a stable complex. GrpE releases ADP from DnaK; ATP binding to DnaK triggers the release of the substrate protein, thus completing the reaction cycle. Several rounds of ATP-dependent interactions between DnaJ, DnaK and GrpE are required for fully efficient folding. Also involved, together with DnaK and GrpE, in the DNA replication of plasmids through activation of initiation proteins. The sequence is that of Chaperone protein DnaJ from Shigella flexneri serotype 5b (strain 8401).